A 129-amino-acid polypeptide reads, in one-letter code: Sulfurtransferase TusD (129 aa).

Cys-79 functions as the Cysteine persulfide intermediate in the catalytic mechanism.

It belongs to the DsrE/TusD family. Heterohexamer, formed by a dimer of trimers. The hexameric TusBCD complex contains 2 copies each of TusB, TusC and TusD. The TusBCD complex interacts with TusE.

Its subcellular location is the cytoplasm. Part of a sulfur-relay system required for 2-thiolation of 5-methylaminomethyl-2-thiouridine (mnm(5)s(2)U) at tRNA wobble positions. Accepts sulfur from TusA and transfers it in turn to TusE. The protein is Sulfurtransferase TusD of Serratia proteamaculans (strain 568).